The chain runs to 149 residues: MAEQLTEEQIAEFKEAFSLFDKDGDGCITTKELGTVMRSLGQNPTEAELQDMISEADADQNGTIDFPEFLNLMARKMKDTDSEEELKEAFKVFDKDQNGFISAAELRHVMTNLGEKLTDEEVDEMIREADIDGDGQVNYEEFVRMMLAK.

Position 2 is an N-acetylalanine (Ala-2). EF-hand domains are found at residues 8-43 (EQIA…LGQN), 44-79 (PTEA…KMKD), 81-116 (DSEE…LGEK), and 117-149 (LTDE…MLAK). Residues Asp-21, Asp-23, Asp-25, Cys-27, Glu-32, Asp-57, Asp-59, Asn-61, Thr-63, Glu-68, Asp-94, Asp-96, Asn-98, and Glu-105 each coordinate Ca(2+). At Lys-116 the chain carries N6,N6,N6-trimethyllysine. Ca(2+)-binding residues include Asp-130, Asp-132, Asp-134, Gln-136, and Glu-141.

Belongs to the calmodulin family. As to expression, high expression in stolon tips and stems, moderate in roots, and very low in leaves. Localized in the meristematic regions of the shoot and root tips, the tip of the developing tuber and the vascular zones of petiole and tuber. Not detected in mesophyll cells.

Functionally, calmodulin mediates the control of a large number of enzymes, ion channels and other proteins by Ca(2+). Among the enzymes to be stimulated by the calmodulin-Ca(2+) complex are a number of protein kinases and phosphatases. The protein is Calmodulin-1 (PCM1) of Solanum tuberosum (Potato).